A 288-amino-acid chain; its full sequence is Small ribosomal subunit protein uS2 (288 aa).

The disordered stretch occupies residues 228 to 288 (RAGLSSDKDA…PAAEAPSTEA (61 aa)). Residues 257 to 288 (QAAPAAEAAPAAEAQAAPAAEAPAAEAPSTEA) show a composition bias toward low complexity.

Belongs to the universal ribosomal protein uS2 family.

The protein is Small ribosomal subunit protein uS2 of Rhodococcus opacus (strain B4).